Here is a 572-residue protein sequence, read N- to C-terminus: Methionine--tRNA ligase (572 aa).

Positions 11-21 (PYINGIKHLGN) match the 'HIGH' region motif. 4 residues coordinate Zn(2+): cysteine 143, cysteine 146, cysteine 156, and cysteine 159. The short motif at 346-350 (QFSTS) is the 'KMSKS' region element. Threonine 349 lines the ATP pocket.

This sequence belongs to the class-I aminoacyl-tRNA synthetase family. MetG type 1 subfamily. In terms of assembly, monomer. Zn(2+) is required as a cofactor.

The protein localises to the cytoplasm. It catalyses the reaction tRNA(Met) + L-methionine + ATP = L-methionyl-tRNA(Met) + AMP + diphosphate. Its function is as follows. Is required not only for elongation of protein synthesis but also for the initiation of all mRNA translation through initiator tRNA(fMet) aminoacylation. This Cereibacter sphaeroides (strain ATCC 17025 / ATH 2.4.3) (Rhodobacter sphaeroides) protein is Methionine--tRNA ligase.